Consider the following 137-residue polypeptide: Holo-[acyl-carrier-protein] synthase (137 aa).

Residues aspartate 8 and glutamate 61 each contribute to the Mg(2+) site.

It belongs to the P-Pant transferase superfamily. AcpS family. The cofactor is Mg(2+).

It localises to the cytoplasm. The enzyme catalyses apo-[ACP] + CoA = holo-[ACP] + adenosine 3',5'-bisphosphate + H(+). Its function is as follows. Transfers the 4'-phosphopantetheine moiety from coenzyme A to a Ser of acyl-carrier-protein. The polypeptide is Holo-[acyl-carrier-protein] synthase (Afipia carboxidovorans (strain ATCC 49405 / DSM 1227 / KCTC 32145 / OM5) (Oligotropha carboxidovorans)).